We begin with the raw amino-acid sequence, 345 residues long: Biotin synthase (345 aa).

The Radical SAM core domain occupies 66–291 (PEVEVEGIIS…RTMLRFAGGR (226 aa)). [4Fe-4S] cluster is bound by residues C81, C85, and C88. [2Fe-2S] cluster is bound by residues C124, C157, C216, and R286.

This sequence belongs to the radical SAM superfamily. Biotin synthase family. As to quaternary structure, homodimer. [4Fe-4S] cluster serves as cofactor. Requires [2Fe-2S] cluster as cofactor.

It catalyses the reaction (4R,5S)-dethiobiotin + (sulfur carrier)-SH + 2 reduced [2Fe-2S]-[ferredoxin] + 2 S-adenosyl-L-methionine = (sulfur carrier)-H + biotin + 2 5'-deoxyadenosine + 2 L-methionine + 2 oxidized [2Fe-2S]-[ferredoxin]. The protein operates within cofactor biosynthesis; biotin biosynthesis; biotin from 7,8-diaminononanoate: step 2/2. In terms of biological role, catalyzes the conversion of dethiobiotin (DTB) to biotin by the insertion of a sulfur atom into dethiobiotin via a radical-based mechanism. The polypeptide is Biotin synthase (Mycobacterium avium (strain 104)).